Reading from the N-terminus, the 816-residue chain is Lon protease (816 aa).

Positions 40–244 constitute a Lon N-terminal domain; that stretch reads VPLIAVPSHP…KVLELLYEEL (205 aa). 398-405 is a binding site for ATP; that stretch reads GPPGVGKT. The Lon proteolytic domain maps to 636–816; that stretch reads AMSPGMVMGL…SMKEVIKLLF (181 aa). Residues Ser724 and Lys767 contribute to the active site.

Belongs to the peptidase S16 family. Homohexamer. Organized in a ring with a central cavity.

It is found in the cytoplasm. The enzyme catalyses Hydrolysis of proteins in presence of ATP.. In terms of biological role, ATP-dependent serine protease that mediates the selective degradation of mutant and abnormal proteins as well as certain short-lived regulatory proteins. Required for cellular homeostasis and for survival from DNA damage and developmental changes induced by stress. Degrades polypeptides processively to yield small peptide fragments that are 5 to 10 amino acids long. Binds to DNA in a double-stranded, site-specific manner. In Borrelia duttonii (strain Ly), this protein is Lon protease.